The chain runs to 171 residues: 3-hydroxydecanoyl-[acyl-carrier-protein] dehydratase (171 aa).

His-71 is a catalytic residue.

It belongs to the thioester dehydratase family. FabA subfamily. As to quaternary structure, homodimer.

The protein resides in the cytoplasm. The enzyme catalyses a (3R)-hydroxyacyl-[ACP] = a (2E)-enoyl-[ACP] + H2O. The catalysed reaction is (3R)-hydroxydecanoyl-[ACP] = (2E)-decenoyl-[ACP] + H2O. It carries out the reaction (2E)-decenoyl-[ACP] = (3Z)-decenoyl-[ACP]. It participates in lipid metabolism; fatty acid biosynthesis. Its function is as follows. Necessary for the introduction of cis unsaturation into fatty acids. Catalyzes the dehydration of (3R)-3-hydroxydecanoyl-ACP to E-(2)-decenoyl-ACP and then its isomerization to Z-(3)-decenoyl-ACP. Can catalyze the dehydratase reaction for beta-hydroxyacyl-ACPs with saturated chain lengths up to 16:0, being most active on intermediate chain length. The protein is 3-hydroxydecanoyl-[acyl-carrier-protein] dehydratase of Rhizobium meliloti (strain 1021) (Ensifer meliloti).